The primary structure comprises 506 residues: Gamma-aminobutyric acid receptor subunit epsilon (506 aa).

Positions 1 to 22 (MLSKVLPVLLGILLILQSRVEG) are cleaved as a signal peptide. The segment at 23 to 66 (PQTESKNEASSRDVVYGPQPQPLENQLLSEETKSTETETGSRVG) is disordered. The Extracellular portion of the chain corresponds to 23 to 280 (PQTESKNEAS…FNVSRRFGYV (258 aa)). N-linked (GlcNAc...) asparagine glycosylation occurs at N134. Residues C195 and C209 are joined by a disulfide bond. N252 is a glycosylation site (N-linked (GlcNAc...) asparagine). A helical membrane pass occupies residues 281 to 301 (AFQNYVPSSVTTMLSWVSFWI). The Cytoplasmic segment spans residues 302-307 (KTESAP). The chain crosses the membrane as a helical span at residues 308–327 (ARTSLGITSVLTMTTLGTFS). Residues 328 to 343 (RKNFPRVSYITALDFY) are Extracellular-facing. The chain crosses the membrane as a helical span at residues 344–364 (IAICFVFCFCALLEFAVLNFL). The Cytoplasmic portion of the chain corresponds to 365 to 485 (IYNQTKAHAS…HVYRLDNYSR (121 aa)). The tract at residues 413–438 (EGSDGEERPSCSAQQPPSPGSPEGPR) is disordered. Residues 486-506 (VVFPVTFFFFNVLYWLVCLNL) form a helical membrane-spanning segment.

It belongs to the ligand-gated ion channel (TC 1.A.9) family. Gamma-aminobutyric acid receptor (TC 1.A.9.5) subfamily. GABRE sub-subfamily. As to quaternary structure, heteropentamer, formed by a combination of alpha (GABRA1-6), beta (GABRB1-3), gamma (GABRG1-3), delta (GABRD), epsilon (GABRE), rho (GABRR1-3), pi (GABRP) and theta (GABRQ) chains, each subunit exhibiting distinct physiological and pharmacological properties. Expressed in many tissues. Highest levels of expression in adult heart and placenta.

It localises to the cell membrane. The protein resides in the postsynaptic cell membrane. It catalyses the reaction chloride(in) = chloride(out). With respect to regulation, potentiated by pentobarbital, loreclezole, and lanthanum and inhibited by zinc and furosemide. Introduction of the epsilon subunit to the receptor complex resulted in diminished modulatory effects by etomidate, propofol, pregnanolone and flurazepam. Its function is as follows. Epsilon subunit of the heteropentameric ligand-gated chloride channel gated by gamma-aminobutyric acid (GABA), a major inhibitory neurotransmitter in the brain. GABA-gated chloride channels, also named GABA(A) receptors (GABAAR), consist of five subunits arranged around a central pore and contain GABA active binding site(s) located at the alpha and beta subunit interfaces. When activated by GABA, GABAARs selectively allow the flow of chloride anions across the cell membrane down their electrochemical gradient. GABAARs containing epsilon subunits also permit spontaneous chloride channel activity while preserving the structural information required for GABA-gated openings. GABARs containing epsilon subunit may regulate cardiac function. The chain is Gamma-aminobutyric acid receptor subunit epsilon from Homo sapiens (Human).